A 727-amino-acid chain; its full sequence is 1,4-alpha-glucan branching enzyme GlgB (727 aa).

Aspartate 411 acts as the Nucleophile in catalysis. Glutamate 464 functions as the Proton donor in the catalytic mechanism.

This sequence belongs to the glycosyl hydrolase 13 family. GlgB subfamily. In terms of assembly, monomer.

It carries out the reaction Transfers a segment of a (1-&gt;4)-alpha-D-glucan chain to a primary hydroxy group in a similar glucan chain.. Its pathway is glycan biosynthesis; glycogen biosynthesis. Its function is as follows. Catalyzes the formation of the alpha-1,6-glucosidic linkages in glycogen by scission of a 1,4-alpha-linked oligosaccharide from growing alpha-1,4-glucan chains and the subsequent attachment of the oligosaccharide to the alpha-1,6 position. This Protochlamydia amoebophila (strain UWE25) protein is 1,4-alpha-glucan branching enzyme GlgB.